Here is a 339-residue protein sequence, read N- to C-terminus: Methionyl-tRNA formyltransferase (339 aa).

110–113 (SLLP) is a (6S)-5,6,7,8-tetrahydrofolate binding site.

Belongs to the Fmt family.

The catalysed reaction is L-methionyl-tRNA(fMet) + (6R)-10-formyltetrahydrofolate = N-formyl-L-methionyl-tRNA(fMet) + (6S)-5,6,7,8-tetrahydrofolate + H(+). Attaches a formyl group to the free amino group of methionyl-tRNA(fMet). The formyl group appears to play a dual role in the initiator identity of N-formylmethionyl-tRNA by promoting its recognition by IF2 and preventing the misappropriation of this tRNA by the elongation apparatus. This is Methionyl-tRNA formyltransferase from Prochlorococcus marinus (strain MIT 9211).